The following is a 419-amino-acid chain: UDP-N-acetylglucosamine 1-carboxyvinyltransferase (419 aa).

Lys22–Asn23 contacts phosphoenolpyruvate. A UDP-N-acetyl-alpha-D-glucosamine-binding site is contributed by Arg91. Cys115 (proton donor) is an active-site residue. The residue at position 115 (Cys115) is a 2-(S-cysteinyl)pyruvic acid O-phosphothioketal. Residues Arg120–Leu124, Lys160–Val163, Asp305, and Ile327 each bind UDP-N-acetyl-alpha-D-glucosamine.

The protein belongs to the EPSP synthase family. MurA subfamily.

Its subcellular location is the cytoplasm. It catalyses the reaction phosphoenolpyruvate + UDP-N-acetyl-alpha-D-glucosamine = UDP-N-acetyl-3-O-(1-carboxyvinyl)-alpha-D-glucosamine + phosphate. It participates in cell wall biogenesis; peptidoglycan biosynthesis. Functionally, cell wall formation. Adds enolpyruvyl to UDP-N-acetylglucosamine. The protein is UDP-N-acetylglucosamine 1-carboxyvinyltransferase of Cronobacter sakazakii (strain ATCC BAA-894) (Enterobacter sakazakii).